The primary structure comprises 523 residues: Magnesium/proton exchanger 1 (523 aa).

11 consecutive transmembrane segments (helical) span residues 24–44, 88–108, 125–145, 157–177, 185–205, 325–345, 349–369, 377–397, 428–448, 461–481, and 495–515; these read LLPI…CFIG, IADV…LATI, GTLV…CVVM, LGVW…LYII, VITL…LLHA, VIGI…AFVP, IAHG…IAYG, ISCV…AAGT, VNIY…NYFV, LSFS…VLVL, and MWAW…VVLS.

This sequence belongs to the Ca(2+):cation antiporter (CaCA) (TC 2.A.19) family. MHX subfamily.

The protein localises to the vacuole membrane. Vacuolar transporter that exchanges protons with Mg(2+), Zn(2+) and Fe(2+) ions. May control the partitioning of Mg(2+) and Zn(2+) between plant organs. In Oryza sativa subsp. japonica (Rice), this protein is Magnesium/proton exchanger 1 (MHX1).